Consider the following 1073-residue polypeptide: Envelopment polyprotein (1073 aa).

A signal peptide spans M1–G19. At D20 to W453 the chain is on the lumenal side. A disulfide bond links C26 and C49. N33 and N63 each carry an N-linked (GlcNAc...) asparagine; by host glycan. Cystine bridges form between C143–C156, C180–C327, C206–C216, C258–C305, C266–C303, C274–C280, C287–C292, C349–C352, C356–C424, and C376–C381. The helical transmembrane segment at L454 to L474 threads the bilayer. The interval K475 to I521 is golgi retention signal. Over K475–E535 the chain is Cytoplasmic. An internal signal sequence for glycoprotein C region spans residues M536–S562. Cystine bridges form between C563–C604, C576–C586, C629–C725, C644–C841, C650–C698, C656–C705, C660–C687, C691–C696, C778–C793, and C809–C823. At C563–W1036 the chain is on the lumenal side. The fusion loop stretch occupies residues C650–C656. Positions C691–C705 are fusion loop. N-linked (GlcNAc...) asparagine; by host glycosylation is found at N853 and N914. 3 disulfides stabilise this stretch: C908/C978, C918/C921, and C943/C974. N936 carries an N-linked (GlcNAc...) asparagine; by host glycan. A helical membrane pass occupies residues I1037–L1057. Over F1058–A1073 the chain is Cytoplasmic.

This sequence belongs to the phlebovirus envelope glycoprotein family. As to quaternary structure, homodimer. Heterodimer with glycoprotein C. Homotrimer (postfusion). In terms of assembly, heterodimer with glycoprotein N. Specific enzymatic cleavages in vivo yield mature proteins including glycoprotein C and glycoprotein N. In terms of processing, the cytoplasmic tail is Palmitoylated. Post-translationally, glycosylated. Palmitoylated.

The protein resides in the virion membrane. It is found in the host Golgi apparatus membrane. The protein localises to the host endoplasmic reticulum membrane. Its function is as follows. Structural component of the virion that interacts with glycoprotein C. It shields the hydrophobic fusion loops of the glycoprotein C, preventing premature fusion. The glycoprotein protrusions are arranged on an icosahedral lattice, with T=12 triangulation. They are able to attach the virion to the host cell receptor CD209/DC-SIGN and to promote fusion of membranes with the late endosome after clathrin-mediated endocytosis of the virion. Plays a role in the packaging of ribonucleoproteins during virus assembly. Functionally, structural component of the virion that interacts with glycoprotein N. Acts as a class II fusion protein that is activated upon acidification and subsequent repositioning of the glycoprotein N. The glycoprotein protrusions are arranged on an icosahedral lattice, with T=12 triangulation. They are able to attach the virion to the host cell receptor CD209/DC-SIGN and to promote fusion of membranes with the late endosome after clathrin-mediated endocytosis of the virion. The protein is Envelopment polyprotein of Dabie bandavirus (Severe fever with thrombocytopenia virus).